Reading from the N-terminus, the 293-residue chain is MVEHYPVLHREVLSFFKNIKGRYIVDATVGGGGHSFLLLKNLPETFLIGIDKDDYALEKAEEKLSPFKGRFRLIKGSFKDIDTIVHSMDIKYVSGVLFDLGVSTFQLKTERGFSFQREEPLDMRMDRTQKKTAFDVVNRYTKIELEKIIKDYGEEKFARRIASAIVEARKKKRIETTKELAQIVYNVYPPPLRRGRIHPATKTFQAIRIEVNNELEEIKEGVNKGIDLLEKGGIIAVISFHSLEDRIVKNIYRERKRLKDIEILTKKPITPGTEEIRENPPSRSAKLRVAKRI.

S-adenosyl-L-methionine is bound by residues 32-34, aspartate 51, phenylalanine 78, aspartate 99, and glutamine 106; that span reads GGH. Residues 271 to 293 form a disordered region; that stretch reads PGTEEIRENPPSRSAKLRVAKRI.

Belongs to the methyltransferase superfamily. RsmH family.

It is found in the cytoplasm. The enzyme catalyses cytidine(1402) in 16S rRNA + S-adenosyl-L-methionine = N(4)-methylcytidine(1402) in 16S rRNA + S-adenosyl-L-homocysteine + H(+). In terms of biological role, specifically methylates the N4 position of cytidine in position 1402 (C1402) of 16S rRNA. The protein is Ribosomal RNA small subunit methyltransferase H of Persephonella marina (strain DSM 14350 / EX-H1).